A 366-amino-acid chain; its full sequence is Histidinol-phosphate aminotransferase 2 (366 aa).

Over residues 1-11 the composition is skewed to polar residues; it reads MQVKDQLSSLQ. The tract at residues 1–21 is disordered; sequence MQVKDQLSSLQPYKPGKSPEQ. Lysine 222 is subject to N6-(pyridoxal phosphate)lysine.

The protein belongs to the class-II pyridoxal-phosphate-dependent aminotransferase family. Histidinol-phosphate aminotransferase subfamily. In terms of assembly, homodimer. Pyridoxal 5'-phosphate serves as cofactor.

It carries out the reaction L-histidinol phosphate + 2-oxoglutarate = 3-(imidazol-4-yl)-2-oxopropyl phosphate + L-glutamate. It participates in amino-acid biosynthesis; L-histidine biosynthesis; L-histidine from 5-phospho-alpha-D-ribose 1-diphosphate: step 7/9. The protein is Histidinol-phosphate aminotransferase 2 of Bacillus thuringiensis subsp. konkukian (strain 97-27).